We begin with the raw amino-acid sequence, 378 residues long: Chaperone protein DnaJ 2 (378 aa).

One can recognise a J domain in the interval 4–68 (DYYGLLGVSR…EKRRIVDLGG (65 aa)). A CR-type zinc finger spans residues 128-210 (GVTKQVTVDT…CVGDGRVRAR (83 aa)). Residues Cys141, Cys144, Cys158, Cys161, Cys184, Cys187, Cys198, and Cys201 each coordinate Zn(2+). 4 CXXCXGXG motif repeats span residues 141 to 148 (CDRCQGKG), 158 to 165 (CDTCGGRG), 184 to 191 (CPTCRGVG), and 198 to 205 (CCQCVGDG).

The protein belongs to the DnaJ family. In terms of assembly, homodimer. Zn(2+) is required as a cofactor.

The protein localises to the cytoplasm. Functionally, participates actively in the response to hyperosmotic and heat shock by preventing the aggregation of stress-denatured proteins and by disaggregating proteins, also in an autonomous, DnaK-independent fashion. Unfolded proteins bind initially to DnaJ; upon interaction with the DnaJ-bound protein, DnaK hydrolyzes its bound ATP, resulting in the formation of a stable complex. GrpE releases ADP from DnaK; ATP binding to DnaK triggers the release of the substrate protein, thus completing the reaction cycle. Several rounds of ATP-dependent interactions between DnaJ, DnaK and GrpE are required for fully efficient folding. Also involved, together with DnaK and GrpE, in the DNA replication of plasmids through activation of initiation proteins. The sequence is that of Chaperone protein DnaJ 2 from Mycobacterium leprae (strain TN).